A 520-amino-acid polypeptide reads, in one-letter code: Hydroxymethylglutaryl-CoA synthase, cytoplasmic (520 aa).

Position 4 is a phosphoserine (Ser-4). Residues Asp-43 and Ala-44 each coordinate (3S)-3-hydroxy-3-methylglutaryl-CoA. 44 to 46 (AGK) contributes to the CoA binding site. Lys-46 carries the post-translational modification N6-acetyllysine. Catalysis depends on Glu-95, which acts as the Proton donor/acceptor. Positions 129, 167, 171, 221, and 264 each coordinate (3S)-3-hydroxy-3-methylglutaryl-CoA. The Acyl-thioester intermediate role is filled by Cys-129. Residue Asn-167 participates in CoA binding. A CoA-binding site is contributed by Ser-221. The active-site Proton donor/acceptor is the His-264. Residues Lys-269 and Lys-273 each contribute to the CoA site. The (3S)-3-hydroxy-3-methylglutaryl-CoA site is built by Lys-273, Asn-343, and Ser-377. The residue at position 273 (Lys-273) is an N6-acetyllysine. The tract at residues 488 to 520 (TATEHIPSPAKKVPRLPATSAESESAVISNGEH) is disordered. Residues Ser-495 and Ser-516 each carry the phosphoserine modification. The segment covering 507–520 (SAESESAVISNGEH) has biased composition (polar residues).

Belongs to the thiolase-like superfamily. HMG-CoA synthase family. As to quaternary structure, homodimer.

Its subcellular location is the cytoplasm. It catalyses the reaction acetoacetyl-CoA + acetyl-CoA + H2O = (3S)-3-hydroxy-3-methylglutaryl-CoA + CoA + H(+). The protein operates within metabolic intermediate biosynthesis; (R)-mevalonate biosynthesis; (R)-mevalonate from acetyl-CoA: step 2/3. Its function is as follows. Catalyzes the condensation of acetyl-CoA with acetoacetyl-CoA to form HMG-CoA, which is converted by HMG-CoA reductase (HMGCR) into mevalonate, a precursor for cholesterol synthesis. This Mus musculus (Mouse) protein is Hydroxymethylglutaryl-CoA synthase, cytoplasmic.